A 739-amino-acid chain; its full sequence is Protein kinase C (739 aa).

The region spanning 1–117 is the C2 domain; the sequence is MFTGKLQIKV…SETAVQDLWV (117 aa). 2 Phorbol-ester/DAG-type zinc fingers span residues 176–226 and 251–301; these read GHKF…VSKC and PHRF…ANTC. Positions 408-665 constitute a Protein kinase domain; that stretch reads FNFIKVLGKG…ENEIRKHPFF (258 aa). Residues 414–422 and Lys437 each bind ATP; that span reads LGKGSFGKV. The active-site Proton acceptor is Asp532. Residues 666–737 form the AGC-kinase C-terminal domain; it reads AKLDWKELEK…VNPKFGPERK (72 aa).

Belongs to the protein kinase superfamily. AGC Ser/Thr protein kinase family. PKC subfamily.

The enzyme catalyses L-seryl-[protein] + ATP = O-phospho-L-seryl-[protein] + ADP + H(+). It carries out the reaction L-threonyl-[protein] + ATP = O-phospho-L-threonyl-[protein] + ADP + H(+). PKC is activated by diacylglycerol which in turn phosphorylates a range of cellular proteins. PKC also serves as the receptor for phorbol esters, a class of tumor promoters. This Drosophila melanogaster (Fruit fly) protein is Protein kinase C (Pkc98E).